The chain runs to 137 residues: Nucleoside diphosphate kinase (137 aa).

The ATP site is built by lysine 9, phenylalanine 57, arginine 85, threonine 91, arginine 102, and asparagine 112. Catalysis depends on histidine 115, which acts as the Pros-phosphohistidine intermediate.

Belongs to the NDK family. As to quaternary structure, homotetramer. Mg(2+) is required as a cofactor.

The protein localises to the cytoplasm. The catalysed reaction is a 2'-deoxyribonucleoside 5'-diphosphate + ATP = a 2'-deoxyribonucleoside 5'-triphosphate + ADP. It carries out the reaction a ribonucleoside 5'-diphosphate + ATP = a ribonucleoside 5'-triphosphate + ADP. In terms of biological role, major role in the synthesis of nucleoside triphosphates other than ATP. The ATP gamma phosphate is transferred to the NDP beta phosphate via a ping-pong mechanism, using a phosphorylated active-site intermediate. The chain is Nucleoside diphosphate kinase from Campylobacter jejuni subsp. jejuni serotype O:23/36 (strain 81-176).